Consider the following 465-residue polypeptide: Neuraminidase (465 aa).

The Intravirion segment spans residues 1–11 (MLPSTIQTLTL). Residues 12–34 (FLTSGGVLLSLYVSASLSYLLYS) traverse the membrane as a helical segment. Positions 13-35 (LTSGGVLLSLYVSASLSYLLYSD) are involved in apical transport and lipid raft association. The Virion surface segment spans residues 35–465 (DILLKFSSKI…DTVTGVDMAL (431 aa)). The interval 38–85 (LKFSSKITAPTMTLDCANASNVQAVNRSATKEMTFLLPEPEWTYPRLS) is hypervariable stalk region. 2 N-linked (GlcNAc...) asparagine; by host glycosylation sites follow: Asn55 and Asn63. Intrachain disulfides connect Cys86-Cys419, Cys121-Cys126, Cys181-Cys228, Cys230-Cys235, Cys276-Cys290, Cys278-Cys288, Cys317-Cys336, and Cys423-Cys446. Residues 88-465 (GSTFQKALLI…DTVTGVDMAL (378 aa)) are head of neuraminidase. A substrate-binding site is contributed by Arg115. Residue Asn143 is glycosylated (N-linked (GlcNAc...) asparagine; by host). Asp148 functions as the Proton donor/acceptor in the catalytic mechanism. A substrate-binding site is contributed by Arg149. 274-275 (EE) is a binding site for substrate. N-linked (GlcNAc...) asparagine; by host glycosylation occurs at Asn283. Substrate is bound at residue Arg291. Ca(2+) is bound by residues Asp292, Thr296, Asp323, Gly343, and Gly345. Position 373 (Arg373) interacts with substrate. Tyr408 (nucleophile) is an active-site residue.

The protein belongs to the glycosyl hydrolase 34 family. As to quaternary structure, homotetramer. Requires Ca(2+) as cofactor. N-glycosylated.

It localises to the virion membrane. It is found in the host apical cell membrane. It catalyses the reaction Hydrolysis of alpha-(2-&gt;3)-, alpha-(2-&gt;6)-, alpha-(2-&gt;8)- glycosidic linkages of terminal sialic acid residues in oligosaccharides, glycoproteins, glycolipids, colominic acid and synthetic substrates.. Inhibited by the neuraminidase inhibitors zanamivir (Relenza) and oseltamivir (Tamiflu). These drugs interfere with the release of progeny virus from infected cells and are effective against all influenza strains. Resistance to neuraminidase inhibitors is quite rare. Its function is as follows. Catalyzes the removal of terminal sialic acid residues from viral and cellular glycoconjugates. Cleaves off the terminal sialic acids on the glycosylated HA during virus budding to facilitate virus release. Additionally helps virus spread through the circulation by further removing sialic acids from the cell surface. These cleavages prevent self-aggregation and ensure the efficient spread of the progeny virus from cell to cell. Otherwise, infection would be limited to one round of replication. Described as a receptor-destroying enzyme because it cleaves a terminal sialic acid from the cellular receptors. May facilitate viral invasion of the upper airways by cleaving the sialic acid moieties on the mucin of the airway epithelial cells. Likely to plays a role in the budding process through its association with lipid rafts during intracellular transport. May additionally display a raft-association independent effect on budding. Plays a role in the determination of host range restriction on replication and virulence. Sialidase activity in late endosome/lysosome traffic seems to enhance virus replication. In Influenza B virus (strain B/Beijing/1/1987), this protein is Neuraminidase.